Here is a 191-residue protein sequence, read N- to C-terminus: MAP6 domain-containing protein 1 (191 aa).

3 S-palmitoyl cysteine lipidation sites follow: C5, C10, and C11. The interval 31 to 106 is disordered; the sequence is HGYSDPGSEE…RGQSSAPPTR (76 aa). A phosphoserine mark is found at S38 and S41. Mn stretches follow at residues 123 to 136 and 158 to 170; these read TTSY…WTGV and DPSP…VPEV. S160 carries the post-translational modification Phosphoserine.

Belongs to the STOP family. As to quaternary structure, interacts with calmodulin. In terms of processing, palmitoylated. Palmitoylation enhances association with microtubules. In terms of tissue distribution, expressed in brain. Found in neurons in primary cultures, but absent in glial cells.

The protein resides in the golgi apparatus. It is found in the cytoplasm. Its subcellular location is the cytoskeleton. Its function is as follows. May have microtubule-stabilizing activity. The chain is MAP6 domain-containing protein 1 (Map6d1) from Mus musculus (Mouse).